The sequence spans 88 residues: Large ribosomal subunit protein uL29 (88 aa).

The protein belongs to the universal ribosomal protein uL29 family.

The sequence is that of Large ribosomal subunit protein uL29 (rpl29) from Sulfurisphaera tokodaii (strain DSM 16993 / JCM 10545 / NBRC 100140 / 7) (Sulfolobus tokodaii).